We begin with the raw amino-acid sequence, 785 residues long: E3 UFM1-protein ligase 1 homolog (785 aa).

The tract at residues A405–V483 is disordered.

Belongs to the UFL1 family.

Functionally, E3 UFM1-protein ligase that mediates ufmylation of target proteins. The sequence is that of E3 UFM1-protein ligase 1 homolog from Drosophila pseudoobscura pseudoobscura (Fruit fly).